A 279-amino-acid chain; its full sequence is NADPH-dependent 7-cyano-7-deazaguanine reductase (279 aa).

86–88 is a binding site for substrate; that stretch reads IES. 88-89 is an NADPH binding site; that stretch reads SK. C186 serves as the catalytic Thioimide intermediate. The Proton donor role is filled by D193. 225-226 is a substrate binding site; it reads HE. 254-255 lines the NADPH pocket; that stretch reads RG.

It belongs to the GTP cyclohydrolase I family. QueF type 2 subfamily. In terms of assembly, homodimer.

The protein resides in the cytoplasm. The catalysed reaction is 7-aminomethyl-7-carbaguanine + 2 NADP(+) = 7-cyano-7-deazaguanine + 2 NADPH + 3 H(+). Its pathway is tRNA modification; tRNA-queuosine biosynthesis. Its function is as follows. Catalyzes the NADPH-dependent reduction of 7-cyano-7-deazaguanine (preQ0) to 7-aminomethyl-7-deazaguanine (preQ1). This Chromobacterium violaceum (strain ATCC 12472 / DSM 30191 / JCM 1249 / CCUG 213 / NBRC 12614 / NCIMB 9131 / NCTC 9757 / MK) protein is NADPH-dependent 7-cyano-7-deazaguanine reductase.